Reading from the N-terminus, the 118-residue chain is Secreted effector CSEP0064 (118 aa).

Positions 1–21 (MRPFQLLSALAIFINLEAVEA) are cleaved as a signal peptide. Cysteine 27 and cysteine 113 are disulfide-bonded.

In terms of assembly, interacts in planta with the pathogenesis-related protein PR10.

It localises to the secreted. Its subcellular location is the host cell. Its function is as follows. Secreted effector that increases susceptibility to infection in both monocotyledonous and dicotyledonous plants. Non-catalytic homolog of fungal RNases that binds host RNA and inhibits the degradation of host ribosomal RNA induced by ribosome-inactivating proteins (RIPs), preventing host cell death, an inviable interaction and demise of the fungus. The sequence is that of Secreted effector CSEP0064 from Blumeria graminis f. sp. hordei (strain DH14) (Barley powdery mildew).